A 226-amino-acid chain; its full sequence is ATP-dependent Clp protease proteolytic subunit 2 (226 aa).

S118 (nucleophile) is an active-site residue. The active site involves H143.

The protein belongs to the peptidase S14 family. Fourteen ClpP subunits assemble into 2 heptameric rings which stack back to back to give a disk-like structure with a central cavity, resembling the structure of eukaryotic proteasomes.

The protein localises to the cytoplasm. The catalysed reaction is Hydrolysis of proteins to small peptides in the presence of ATP and magnesium. alpha-casein is the usual test substrate. In the absence of ATP, only oligopeptides shorter than five residues are hydrolyzed (such as succinyl-Leu-Tyr-|-NHMec, and Leu-Tyr-Leu-|-Tyr-Trp, in which cleavage of the -Tyr-|-Leu- and -Tyr-|-Trp bonds also occurs).. Cleaves peptides in various proteins in a process that requires ATP hydrolysis. Has a chymotrypsin-like activity. Plays a major role in the degradation of misfolded proteins. The protein is ATP-dependent Clp protease proteolytic subunit 2 of Synechocystis sp. (strain ATCC 27184 / PCC 6803 / Kazusa).